A 225-amino-acid polypeptide reads, in one-letter code: UPF0758 protein BPP1850 (225 aa).

The MPN domain maps to 103-225 (ALANPDLVRR…TVSMAAQGHL (123 aa)). Zn(2+) contacts are provided by His-174, His-176, and Asp-187. Positions 174-187 (HNHPGGTAAASAAD) match the JAMM motif motif.

It belongs to the UPF0758 family.

This Bordetella parapertussis (strain 12822 / ATCC BAA-587 / NCTC 13253) protein is UPF0758 protein BPP1850.